Here is a 422-residue protein sequence, read N- to C-terminus: UDP-N-acetylglucosamine 1-carboxyvinyltransferase (422 aa).

Residue 22–23 (KN) coordinates phosphoenolpyruvate. Residue Arg-94 coordinates UDP-N-acetyl-alpha-D-glucosamine. The active-site Proton donor is the Cys-118. Cys-118 is modified (2-(S-cysteinyl)pyruvic acid O-phosphothioketal). UDP-N-acetyl-alpha-D-glucosamine contacts are provided by residues 123–127 (RPVDL), Asp-309, and Ile-331.

This sequence belongs to the EPSP synthase family. MurA subfamily.

Its subcellular location is the cytoplasm. The catalysed reaction is phosphoenolpyruvate + UDP-N-acetyl-alpha-D-glucosamine = UDP-N-acetyl-3-O-(1-carboxyvinyl)-alpha-D-glucosamine + phosphate. Its pathway is cell wall biogenesis; peptidoglycan biosynthesis. In terms of biological role, cell wall formation. Adds enolpyruvyl to UDP-N-acetylglucosamine. The polypeptide is UDP-N-acetylglucosamine 1-carboxyvinyltransferase (Cereibacter sphaeroides (strain KD131 / KCTC 12085) (Rhodobacter sphaeroides)).